A 578-amino-acid chain; its full sequence is Lysine--tRNA ligase (578 aa).

Residues E414 and E421 each contribute to the Mg(2+) site.

The protein belongs to the class-II aminoacyl-tRNA synthetase family. In terms of assembly, homodimer. Requires Mg(2+) as cofactor.

It is found in the cytoplasm. It carries out the reaction tRNA(Lys) + L-lysine + ATP = L-lysyl-tRNA(Lys) + AMP + diphosphate. The sequence is that of Lysine--tRNA ligase from Porphyromonas gingivalis (strain ATCC BAA-308 / W83).